A 425-amino-acid chain; its full sequence is Histone-binding protein RBBP4 (425 aa).

The residue at position 2 (alanine 2) is an N-acetylalanine. Lysine 4 carries the post-translational modification N6-acetyllysine; alternate. Lysine 4 is covalently cross-linked (Glycyl lysine isopeptide (Lys-Gly) (interchain with G-Cter in SUMO2); alternate). A Glycyl lysine isopeptide (Lys-Gly) (interchain with G-Cter in ubiquitin); alternate cross-link involves residue lysine 4. 7 WD repeats span residues 32 to 125 (YDLV…NHEG), 126 to 175 (EVNR…RLRG), 176 to 223 (HQKE…KTIF), 225 to 270 (GHTA…HSVD), 271 to 314 (AHTA…HSFE), 315 to 371 (SHKD…FIHG), and 372 to 404 (GHTA…VWQM). At serine 110 the chain carries Phosphoserine. Position 160 is an N6-acetyllysine; alternate (lysine 160). Residue lysine 160 forms a Glycyl lysine isopeptide (Lys-Gly) (interchain with G-Cter in SUMO2); alternate linkage. Position 355 is a phosphoserine (serine 355).

The protein belongs to the WD repeat RBAP46/RBAP48/MSI1 family. In terms of assembly, binds directly to helix 1 of the histone fold of histone H4, a region that is not accessible when H4 is in chromatin. Subunit of the chromatin assembly factor 1 (CAF-1) complex, which is composed of RBBP4, CHAF1B and CHAF1A. Subunit of the core histone deacetylase (HDAC) complex, which is composed of HDAC1, HDAC2, RBBP4 and RBBP7. The core HDAC complex associates with SIN3A, ARID4B/SAP180, SAP18, SAP30, SAP130, SUDS3/SAP45 and possibly ARID4A/RBP1 and ING1 to form the SIN3 HDAC complex. Component of the nucleosome remodeling and deacetylase (NuRD) repressor complex, composed of core proteins MTA1, MTA2, MTA3, RBBP4, RBBP7, HDAC1, HDAC2, MBD2, MBD3, and peripherally associated proteins CDK2AP1, CDK2AP2, GATAD2A, GATAD2B, CHD3, CHD4 and CHD5. The exact stoichiometry of the NuRD complex is unknown, and some subunits such as MBD2 and MBD3, GATAD2A and GATAD2B, and CHD3, CHD4 and CHD5 define mutually exclusive NuRD complexes. Interacts with ZNF512B; the interaction is direct and may play a role in repressing gene expression. The NuRD complex may also interact with MBD3L1 and MBD3L2. Component of the PRC2 complex, which consists of the core subunits EED, EZH1 or EZH2, SUZ12, and RBBP4, and various combinations of accessory subunits including AEBP2, JARID2, PHF19, MTF2 and EPOP. Forms a monomeric PRC2.2 (class 2) complex consisting of at least SUZ12, RBBP4, AEBP2 and JARID2. Forms a dimeric PRC2.1 (class 1, PRC-PCL) complex consisting of at least SUZ12, RBBP4, and PHF19; PHF19 stabilizes the dimeric structure which enhances PRC2 interaction with chromatin. Component of the NURF-1 ISWI chromatin remodeling complex (also called the nucleosome-remodeling factor (NURF) complex) at least composed of SMARCA1 (isoform 2), BPTF, RBBP4 and RBBP7. Within the complex interacts with isoform 2 of SMARCA1. Component of the BPFT-SMARCA1 complex at least composed of SMARCA1 (isoform 1), BPFT, RBBP4 and RBBP7; the complex is catalytically inactive and does not remodel chromatin. Within the complex interacts with isoform 1 of SMARCA1. Interacts with the ISWI chromatin remodeling complex component SMARCA5; the interaction is direct. Interacts with the viral protein-binding domain of the retinoblastoma protein (RB1). Component of the DREAM complex (also named LINC complex) at least composed of E2F4, E2F5, LIN9, LIN37, LIN52, LIN54, MYBL1, MYBL2, RBL1, RBL2, RBBP4, TFDP1 and TFDP2. The complex exists in quiescent cells where it represses cell cycle-dependent genes. It dissociates in S phase when LIN9, LIN37, LIN52 and LIN54 form a subcomplex that binds to MYBL2. Found in a complex composed of at least SINHCAF, SIN3A, HDAC1, SAP30, RBBP4, OGT and TET1. Interacts with ZNF827; the interaction is direct and recruits RBBP4 to telomeres. Interacts with MTA1; the interaction is direct and mutually exclusive with binding histone H4. Interacts with ARMC12 (via ARM domains). Interacts with BRCA1. Interacts with CDK2AP1. Interacts with CREBBP, and this interaction may be enhanced by the binding of phosphorylated CREB1 to CREBBP. Interacts with ERCC6. Interacts with HDAC7. Interacts with PHF6. Interacts with PWWP2B. Interacts with SPEN/MINT. Interacts with SUV39H1.

The protein localises to the nucleus. It localises to the chromosome. Its subcellular location is the telomere. In terms of biological role, core histone-binding subunit that may target chromatin assembly factors, chromatin remodeling factors and histone deacetylases to their histone substrates in a manner that is regulated by nucleosomal DNA. Component of the chromatin assembly factor 1 (CAF-1) complex, which is required for chromatin assembly following DNA replication and DNA repair. Component of the core histone deacetylase (HDAC) complex, which promotes histone deacetylation and consequent transcriptional repression. Component of the nucleosome remodeling and histone deacetylase complex (the NuRD complex), which promotes transcriptional repression by histone deacetylation and nucleosome remodeling. Component of the PRC2 complex, which promotes repression of homeotic genes during development. Component of the NURF (nucleosome remodeling factor) complex. This Bos taurus (Bovine) protein is Histone-binding protein RBBP4 (RBBP4).